A 118-amino-acid chain; its full sequence is MDLIIQNLEKEYMKKDIPEIWPGDTVRVHYRIVEGDKERIQVYEGVVIAKKHGGIRETITVRKVVQGVGVERIFPLHSPLVEKIEVVRRGRVRRAKLYYLRERKGKAAKIAEREENEG.

This sequence belongs to the bacterial ribosomal protein bL19 family.

Functionally, this protein is located at the 30S-50S ribosomal subunit interface and may play a role in the structure and function of the aminoacyl-tRNA binding site. In Dictyoglomus thermophilum (strain ATCC 35947 / DSM 3960 / H-6-12), this protein is Large ribosomal subunit protein bL19.